A 201-amino-acid chain; its full sequence is Holliday junction branch migration complex subunit RuvA (201 aa).

Positions 1–63 are domain I; it reads MIEFVRGYVD…EDTLALYGFR (63 aa). The interval 64–142 is domain II; it reads TREERTLFAK…AVTAKTFPDL (79 aa). Residues 143–153 form a flexible linker region; sequence FHLQEESARPH. Residues 153–201 are domain III; that stretch reads HLSALEEAIEALKALGYAEREIQKVVPSLMKENLSTDQYVKRALQQLLK.

This sequence belongs to the RuvA family. Homotetramer. Forms an RuvA(8)-RuvB(12)-Holliday junction (HJ) complex. HJ DNA is sandwiched between 2 RuvA tetramers; dsDNA enters through RuvA and exits via RuvB. An RuvB hexamer assembles on each DNA strand where it exits the tetramer. Each RuvB hexamer is contacted by two RuvA subunits (via domain III) on 2 adjacent RuvB subunits; this complex drives branch migration. In the full resolvosome a probable DNA-RuvA(4)-RuvB(12)-RuvC(2) complex forms which resolves the HJ.

Its subcellular location is the cytoplasm. Functionally, the RuvA-RuvB-RuvC complex processes Holliday junction (HJ) DNA during genetic recombination and DNA repair, while the RuvA-RuvB complex plays an important role in the rescue of blocked DNA replication forks via replication fork reversal (RFR). RuvA specifically binds to HJ cruciform DNA, conferring on it an open structure. The RuvB hexamer acts as an ATP-dependent pump, pulling dsDNA into and through the RuvAB complex. HJ branch migration allows RuvC to scan DNA until it finds its consensus sequence, where it cleaves and resolves the cruciform DNA. The chain is Holliday junction branch migration complex subunit RuvA from Geobacillus sp. (strain WCH70).